Reading from the N-terminus, the 269-residue chain is tRNA uridine(34) hydroxylase (269 aa).

The 95-residue stretch at glutamine 122–asparagine 216 folds into the Rhodanese domain. Cysteine 176 (cysteine persulfide intermediate) is an active-site residue.

The protein belongs to the TrhO family.

It carries out the reaction uridine(34) in tRNA + AH2 + O2 = 5-hydroxyuridine(34) in tRNA + A + H2O. Its function is as follows. Catalyzes oxygen-dependent 5-hydroxyuridine (ho5U) modification at position 34 in tRNAs. The chain is tRNA uridine(34) hydroxylase from Synechococcus elongatus (strain ATCC 33912 / PCC 7942 / FACHB-805) (Anacystis nidulans R2).